A 243-amino-acid chain; its full sequence is Probable glycerol uptake facilitator protein (243 aa).

2 consecutive transmembrane segments (helical) span residues 7–27 (ILLGELIGTMVLIILGNGVCA) and 44–64 (LLIALGWGFAVFCGVVISIQV). The NPA 1 signature appears at 72-74 (NPA). Transmembrane regions (helical) follow at residues 88 to 108 (IGLLFAMIAMQLLGAMIAQII), 143 to 163 (ISYEMLGTMILLAGVMAGDYH), and 166 to 186 (TGVFFVMAIVMSLGSVTGCAI). The short motif at 187–189 (NPA) is the NPA 2 element. Residues 221-241 (LVPLLAPIAAGLIMGGFSLLI) form a helical membrane-spanning segment.

It belongs to the MIP/aquaporin (TC 1.A.8) family.

Its subcellular location is the cell membrane. It catalyses the reaction glycerol(in) = glycerol(out). Mediates glycerol diffusion across the cytoplasmic membrane via a pore-type mechanism. The chain is Probable glycerol uptake facilitator protein (glpF) from Mycoplasmoides gallisepticum (strain R(low / passage 15 / clone 2)) (Mycoplasma gallisepticum).